Consider the following 631-residue polypeptide: MSTTTLTRREQRAKAQHFIDTLEGTAFPNSKRIYVTGSQHDIRVPMREIQLSPTLIGGSKDNPQFEENEAVPVYDTSGPYGDPEVAINVQQGLAKLRQPWIDARNDSEELDDRSSAYTRERLADDGLDDLRFTGLLTPKRAKAGKRVTQLHYARNGIVTPEMEFIAIRENMGRERIRSEVLRHQHPGMSFGARLPENITPEFVRDEVAAGRAIIPANINHPESEPMIIGRNFLVKVNANIGNSAVTSSIEEEVEKLVWATRWGADTVMDLSTGRYIHETREWILRNSPVPIGTVPIYQALEKVNGIAEDLTWEAFRDTLLEQAEQGVDYFTIHAGVLLRYVPMTAKRLTGIVSRGGSIMAKWCLSHHKENFLFEHFREICEICAAYDVSLSLGDGLRPGSIQDANDEAQFSELHTLGELTKIAWEYDVQVMIEGPGHVPMHMIQRNMTEELEHCHEAPFYTLGPLTTDIAPGYDHFTSGIGAAMIGWFGCAMLCYVTPKEHLGLPNKEDVKQGLITYKIAAHAADLAKGHPGAQIRDNAMSKARFEFRWEDQFNLALDPFTARAWHDETLPQESGKVAHFCSMCGPKFCSMKISQEVRDYAAAQTIEVGMADMSENFRAKGGEIYLKREEV.

Substrate contacts are provided by residues asparagine 239, methionine 268, tyrosine 297, histidine 333, 353–355 (SRG), 394–397 (DGLR), and glutamate 433. Residue histidine 437 coordinates Zn(2+). Residue tyrosine 460 participates in substrate binding. Histidine 501 lines the Zn(2+) pocket. Residues cysteine 581, cysteine 584, and cysteine 589 each coordinate [4Fe-4S] cluster.

Belongs to the ThiC family. In terms of assembly, homodimer. The cofactor is [4Fe-4S] cluster.

The catalysed reaction is 5-amino-1-(5-phospho-beta-D-ribosyl)imidazole + S-adenosyl-L-methionine = 4-amino-2-methyl-5-(phosphooxymethyl)pyrimidine + CO + 5'-deoxyadenosine + formate + L-methionine + 3 H(+). It functions in the pathway cofactor biosynthesis; thiamine diphosphate biosynthesis. Functionally, catalyzes the synthesis of the hydroxymethylpyrimidine phosphate (HMP-P) moiety of thiamine from aminoimidazole ribotide (AIR) in a radical S-adenosyl-L-methionine (SAM)-dependent reaction. The sequence is that of Phosphomethylpyrimidine synthase from Salmonella schwarzengrund (strain CVM19633).